We begin with the raw amino-acid sequence, 399 residues long: MNFKTENSTTPNGDWSQSKAFTNSGSSFPVLNGTCELDQENLALSNSGQPESIFTQDSGLHGIDVAAPSDITDLNNQSGYQYNNNLAHDLYFTGSMEMPTTQHPYITNTNNHLSYSNSSEEFSPIGNNMSPDSTGGANSNNFTSGNKRKASNESFSPLSGHHYGTESGNNNNNNGTSRSSQSSSHKSRKKLLDEKDAALIARDDSELTEEELQMKRKAQNRAAQRAFRERKESKLKELEAKLLASEEERQKLLDELEQIKKQNISIATENEILKHNGMGNINNDVQIGNLSSYGRLQVDKFNFPKTQKDFIEHVLQGTNHQLKDENKDKVYNDNQGHKLLALGAVWDYLQIKAEEADLDFNSIDFNDVMEKLKGNEKCHGYGPAYPLELVNEAIESSLN.

Disordered stretches follow at residues 1 to 21 and 103 to 197; these read MNFKTENSTTPNGDWSQSKAF and HPYI…EKDA. The span at 103–145 shows a compositional bias: polar residues; it reads HPYITNTNNHLSYSNSSEEFSPIGNNMSPDSTGGANSNNFTSG. Over residues 167-184 the composition is skewed to low complexity; sequence SGNNNNNNGTSRSSQSSS. The region spanning 210 to 273 is the bZIP domain; the sequence is EELQMKRKAQ…ISIATENEIL (64 aa). The basic motif stretch occupies residues 215-234; the sequence is KRKAQNRAAQRAFRERKESK. Residues 235-242 form a leucine-zipper region; sequence LKELEAKL.

It belongs to the bZIP family.

Its subcellular location is the nucleus. Its function is as follows. Transcription factor that confers fluconazole resistance in S.cerevisiae by activation of the PDR5 gene. Can also activate the transcription of S.cerevisiae genes involved in 4-nitroquinoline-N-oxide resistance. In Candida albicans (Yeast), this protein is Fluconazole resistance protein 3 (FCR3).